The chain runs to 335 residues: Cell division protein ZipA (335 aa).

Topologically, residues 1 to 6 (MENLQL) are periplasmic. A helical transmembrane segment spans residues 7 to 27 (VLFVLGAVAIIAVLVHGFWSI). The Cytoplasmic portion of the chain corresponds to 28-335 (RRQQPKSLKE…SYLQRIRAQM (308 aa)). 2 disordered regions span residues 37–128 (ESPM…NEEV) and 163–185 (RPAPRVEAPQSVAPASVEPVSVE). Low complexity predominate over residues 170–185 (APQSVAPASVEPVSVE).

This sequence belongs to the ZipA family. As to quaternary structure, interacts with FtsZ via their C-terminal domains.

Its subcellular location is the cell inner membrane. Functionally, essential cell division protein that stabilizes the FtsZ protofilaments by cross-linking them and that serves as a cytoplasmic membrane anchor for the Z ring. Also required for the recruitment to the septal ring of downstream cell division proteins. The polypeptide is Cell division protein ZipA (Shewanella loihica (strain ATCC BAA-1088 / PV-4)).